A 385-amino-acid chain; its full sequence is Calcium/calmodulin-dependent protein kinase type 1D (385 aa).

The Protein kinase domain maps to 23–279; the sequence is FEFKETLGTG…CEQAARHPWI (257 aa). ATP is bound by residues 29 to 37 and Lys52; that span reads LGTGAFSEV. Lys113 is covalently cross-linked (Glycyl lysine isopeptide (Lys-Gly) (interchain with G-Cter in SUMO2)). Residue Ser122 is modified to Phosphoserine. Asp144 acts as the Proton acceptor in catalysis. Thr180 is subject to Phosphothreonine; by CaMKK1 and CaMKK2. Residues 279 to 319 are autoinhibitory domain; that stretch reads IAGDTALNKNIHESVSAQIRKNFAKSKWRQAFNATAVVRHM. Residues 299–320 are calmodulin-binding; the sequence is KNFAKSKWRQAFNATAVVRHMR. Residues 318-324 carry the Nuclear export signal motif; sequence HMRKLHL. Positions 360 to 385 are disordered; that stretch reads SSGVSGVGAERRPRPTTVTAVHSGSK. Over residues 375–385 the composition is skewed to polar residues; sequence TTVTAVHSGSK.

Belongs to the protein kinase superfamily. CAMK Ser/Thr protein kinase family. CaMK subfamily. Widely expressed. Highly and mostly expressed in polymorphonuclear leukocytes (neutrophilic and eosinophilic granulocytes) while little or no expression is observed in monocytes and lymphocytes.

It is found in the cytoplasm. Its subcellular location is the nucleus. The enzyme catalyses L-seryl-[protein] + ATP = O-phospho-L-seryl-[protein] + ADP + H(+). It catalyses the reaction L-threonyl-[protein] + ATP = O-phospho-L-threonyl-[protein] + ADP + H(+). Activated by Ca(2+)/calmodulin. Binding of calmodulin results in conformational change that relieves intrasteric autoinhibition and allows phosphorylation of Thr-180 within the activation loop by CaMKK1 or CaMKK2. Phosphorylation of Thr-180 results in several fold increase in total activity. Unlike CaMK4, may be unable to exhibit autonomous activity after Ca(2+)/calmodulin activation. In terms of biological role, calcium/calmodulin-dependent protein kinase that operates in the calcium-triggered CaMKK-CaMK1 signaling cascade and, upon calcium influx, activates CREB-dependent gene transcription, regulates calcium-mediated granulocyte function and respiratory burst and promotes basal dendritic growth of hippocampal neurons. In neutrophil cells, required for cytokine-induced proliferative responses and activation of the respiratory burst. Activates the transcription factor CREB1 in hippocampal neuron nuclei. May play a role in apoptosis of erythroleukemia cells. In vitro, phosphorylates transcription factor CREM isoform Beta. This chain is Calcium/calmodulin-dependent protein kinase type 1D (CAMK1D), found in Homo sapiens (Human).